A 792-amino-acid polypeptide reads, in one-letter code: Alpha-1,6-mannosylglycoprotein 6-beta-N-acetylglucosaminyltransferase B (792 aa).

Residues 1 to 24 lie on the Cytoplasmic side of the membrane; sequence MITVNPDGKIMVRRCLVTLRPFRL. The helical; Signal-anchor for type II membrane protein transmembrane segment at 25–45 threads the bilayer; the sequence is FVLGIGFFTLCFLMTSLGGQF. Over 46–792 the chain is Lumenal; sequence SARRLGDSPF…GQVALCQGCL (747 aa). An N-linked (GlcNAc...) asparagine glycan is attached at N127. 4 disulfides stabilise this stretch: C157-C195, C168-C208, C184-C353, and C387-C644. N675 carries N-linked (GlcNAc...) asparagine glycosylation. Cystine bridges form between C700-C775, C704-C777, C711-C764, C732-C753, and C788-C791.

It belongs to the glycosyltransferase 18 family. The cofactor is Mn(2+). In terms of tissue distribution, present in brain (at protein level). Predominantly expressed in hippocampus, superficial layers of the brain cortex, striatum, nucleus accumbens, a subset of nuclei in the thalamus, inferior colliculus, brain stem and cerebellum.

The protein localises to the golgi apparatus membrane. It catalyses the reaction N(4)-{beta-D-GlcNAc-(1-&gt;2)-[beta-D-GlcNAc-(1-&gt;4)]-alpha-D-Man-(1-&gt;3)-[beta-D-GlcNAc-(1-&gt;2)-alpha-D-Man-(1-&gt;6)]-beta-D-Man-(1-&gt;4)-beta-D-GlcNAc-(1-&gt;4)-beta-D-GlcNAc}-L-asparaginyl-[protein] + UDP-N-acetyl-alpha-D-glucosamine = N(4)-{beta-D-GlcNAc-(1-&gt;2)-[beta-D-GlcNAc-(1-&gt;4)]-alpha-D-Man-(1-&gt;3)-[beta-D-GlcNAc-(1-&gt;2)-[beta-D-GlcNAc-(1-&gt;6)]-alpha-D-Man-(1-&gt;6)]-beta-D-Man-(1-&gt;4)-beta-D-GlcNAc-(1-&gt;4)-beta-D-GlcNAc}-L-asparaginyl-[protein] + UDP + H(+). The catalysed reaction is 3-O-[N-acetyl-beta-D-glucosaminyl-(1-&gt;2)-alpha-D-mannosyl]-L-seryl-[protein] + UDP-N-acetyl-alpha-D-glucosamine = O(3)-{N-acetyl-beta-D-glucosaminyl-(1-&gt;2)-[N-acetyl-beta-D-glucosaminyl-(1-&gt;6)]-alpha-D-mannosyl}-L-seryl-[protein] + UDP + H(+). It carries out the reaction 3-O-[N-acetyl-beta-D-glucosaminyl-(1-&gt;2)-alpha-D-mannosyl]-L-threonyl-[protein] + UDP-N-acetyl-alpha-D-glucosamine = O(3)-{N-acetyl-beta-D-glucosaminyl-(1-&gt;2)-[N-acetyl-beta-D-glucosaminyl-(1-&gt;6)]-alpha-D-mannosyl}-L-threonyl-[protein] + UDP + H(+). It functions in the pathway protein modification; protein glycosylation. Its function is as follows. Glycosyltransferase that acts on alpha-linked mannose of N-glycans and O-mannosyl glycans. Catalyzes the transfer of N-acetylglucosamine (GlcNAc) to the beta 1-6 linkage of the mannose residue of GlcNAc-beta1,2-Man-alpha on both the alpha1,3- and alpha1,6-linked mannose arms in the core structure of N-glycan. Also acts on the GlcNAc-beta1,2-Man-alpha1-Ser/Thr moiety, forming a 2,6-branched structure in brain O-mannosyl glycan. Plays an active role in modulating integrin and laminin-dependent adhesion and migration of neuronal cells via its activity in the O-mannosyl glycan pathway. The chain is Alpha-1,6-mannosylglycoprotein 6-beta-N-acetylglucosaminyltransferase B (Mgat5b) from Mus musculus (Mouse).